Consider the following 515-residue polypeptide: Fatty acyl-CoA reductase 2 (515 aa).

Residues 1–465 are Cytoplasmic-facing; that stretch reads MSMIAAFYGG…AKQHLKRLRN (465 aa). The helical transmembrane segment at 466 to 484 threads the bilayer; the sequence is IHYLFNTALFLIAWRLLIA. Residues 485–515 lie on the Peroxisomal side of the membrane; that stretch reads RSQVARNVWFFIVSFCYKFLSYFRASSTLNV.

The protein belongs to the fatty acyl-CoA reductase family.

It localises to the peroxisome membrane. The enzyme catalyses a long-chain fatty acyl-CoA + 2 NADPH + 2 H(+) = a long-chain primary fatty alcohol + 2 NADP(+) + CoA. It catalyses the reaction hexadecanoyl-CoA + 2 NADPH + 2 H(+) = hexadecan-1-ol + 2 NADP(+) + CoA. The catalysed reaction is octadecanoyl-CoA + 2 NADPH + 2 H(+) = octadecan-1-ol + 2 NADP(+) + CoA. It carries out the reaction a very long-chain fatty acyl-CoA + 2 NADPH + 2 H(+) = a very long-chain primary fatty alcohol + 2 NADP(+) + CoA. The enzyme catalyses an ultra-long-chain fatty acyl-CoA + 2 NADPH + 2 H(+) = an ultra long-chain primary fatty alcohol + 2 NADP(+) + CoA. It catalyses the reaction eicosanoyl-CoA + 2 NADPH + 2 H(+) = eicosan-1-ol + 2 NADP(+) + CoA. The catalysed reaction is docosanoyl-CoA + 2 NADPH + 2 H(+) = docosan-1-ol + 2 NADP(+) + CoA. It carries out the reaction tetracosanoyl-CoA + 2 NADPH + 2 H(+) = tetracosan-1-ol + 2 NADP(+) + CoA. The enzyme catalyses hexacosanoyl-CoA + 2 NADPH + 2 H(+) = hexacosan-1-ol + 2 NADP(+) + CoA. It catalyses the reaction octacosanoyl-CoA + 2 NADPH + 2 H(+) = octacosan-1-ol + 2 NADP(+) + CoA. The catalysed reaction is triacontanoyl-CoA + 2 NADPH + 2 H(+) = triacontan-1-ol + 2 NADP(+) + CoA. It carries out the reaction 18-methylnonadecanoyl-CoA + 2 NADPH + 2 H(+) = 18-methylnonadecan-1-ol + 2 NADP(+) + CoA. The enzyme catalyses 20-methylheneicosanoyl-CoA + 2 NADPH + 2 H(+) = 20-methylheneicosan-1-ol + 2 NADP(+) + CoA. It catalyses the reaction 22-methyltricosanoyl-CoA + 2 NADPH + 2 H(+) = 22-methyltricosan-1-ol + 2 NADP(+) + CoA. The catalysed reaction is 24-methylpentacosanoyl-CoA + 2 NADPH + 2 H(+) = 24-methylpentacosan-1-ol + 2 NADP(+) + CoA. Functionally, catalyzes the reduction of saturated but not unsaturated C16 or C18 fatty acyl-CoA to fatty alcohols (FAls). A lower activity can be observed with shorter fatty acyl-CoA substrates. Can produce very long-chain and ultra long-chain FAls, regardless of whether they have a straight or branched chain. Involved in the production of ether lipids/plasmalogens and wax monoesters whose synthesis requires FAls as substrates. The polypeptide is Fatty acyl-CoA reductase 2 (Bos taurus (Bovine)).